A 304-amino-acid chain; its full sequence is Homoserine dehydrogenase (304 aa).

Residues tyrosine 8, asparagine 10, valine 11, arginine 38, arginine 39, and serine 73 each contribute to the NADP(+) site. Tyrosine 8 is an NADPH binding site. Valine 11 and arginine 38 together coordinate NADPH. Residue valine 11 coordinates NAD(+). Residues serine 73, serine 74, threonine 100, and lysine 102 each coordinate NADPH. Residue serine 73 coordinates NAD(+). NADP(+)-binding residues include threonine 100 and lysine 102. Na(+) contacts are provided by valine 129 and threonine 133. NADP(+)-binding residues include glycine 182 and glutamate 185. Residues glutamate 185 and aspartate 196 each coordinate L-homoserine. Lysine 200 acts as the Proton donor in catalysis. Glycine 284 is a binding site for NADP(+). Glycine 284 is an NADPH binding site. Glycine 284 is an NAD(+) binding site.

This sequence belongs to the homoserine dehydrogenase family. As to quaternary structure, homodimer. A metal cation is required as a cofactor. Post-translationally, the enzyme is activated by reductive cleavage of the interchain disulfide bond between the two subunits.

The enzyme catalyses L-homoserine + NADP(+) = L-aspartate 4-semialdehyde + NADPH + H(+). It catalyses the reaction L-homoserine + NAD(+) = L-aspartate 4-semialdehyde + NADH + H(+). The protein operates within amino-acid biosynthesis; L-methionine biosynthesis via de novo pathway; L-homoserine from L-aspartate: step 3/3. It functions in the pathway amino-acid biosynthesis; L-threonine biosynthesis; L-threonine from L-aspartate: step 3/5. Its activity is regulated as follows. Inhibited by cysteine. Its function is as follows. Catalyzes the conversion of L-aspartate-beta-semialdehyde (L-Asa) to L-homoserine (L-Hse), the third step in the biosynthesis of threonine and methionine from aspartate. This Sulfurisphaera tokodaii (strain DSM 16993 / JCM 10545 / NBRC 100140 / 7) (Sulfolobus tokodaii) protein is Homoserine dehydrogenase.